We begin with the raw amino-acid sequence, 437 residues long: Phosphoglucosamine mutase (437 aa).

The active-site Phosphoserine intermediate is the Ser101. Ser101, Asp234, Asp236, and Asp238 together coordinate Mg(2+). The residue at position 101 (Ser101) is a Phosphoserine.

This sequence belongs to the phosphohexose mutase family. Mg(2+) serves as cofactor. Activated by phosphorylation.

The enzyme catalyses alpha-D-glucosamine 1-phosphate = D-glucosamine 6-phosphate. Its function is as follows. Catalyzes the conversion of glucosamine-6-phosphate to glucosamine-1-phosphate. The sequence is that of Phosphoglucosamine mutase from Thermus thermophilus (strain ATCC BAA-163 / DSM 7039 / HB27).